A 276-amino-acid polypeptide reads, in one-letter code: 3-methyl-2-oxobutanoate hydroxymethyltransferase (276 aa).

Residues Asp45 and Asp84 each contribute to the Mg(2+) site. Residues 45-46 (DS), Asp84, and Lys114 contribute to the 3-methyl-2-oxobutanoate site. Position 116 (Glu116) interacts with Mg(2+). Catalysis depends on Glu183, which acts as the Proton acceptor.

It belongs to the PanB family. In terms of assembly, homodecamer; pentamer of dimers. The cofactor is Mg(2+).

The protein resides in the cytoplasm. It carries out the reaction 3-methyl-2-oxobutanoate + (6R)-5,10-methylene-5,6,7,8-tetrahydrofolate + H2O = 2-dehydropantoate + (6S)-5,6,7,8-tetrahydrofolate. The protein operates within cofactor biosynthesis; (R)-pantothenate biosynthesis; (R)-pantoate from 3-methyl-2-oxobutanoate: step 1/2. Its function is as follows. Catalyzes the reversible reaction in which hydroxymethyl group from 5,10-methylenetetrahydrofolate is transferred onto alpha-ketoisovalerate to form ketopantoate. The polypeptide is 3-methyl-2-oxobutanoate hydroxymethyltransferase (Carboxydothermus hydrogenoformans (strain ATCC BAA-161 / DSM 6008 / Z-2901)).